A 295-amino-acid polypeptide reads, in one-letter code: Ethanolamine ammonia-lyase small subunit (295 aa).

Val207, Glu228, and Cys258 together coordinate adenosylcob(III)alamin.

This sequence belongs to the EutC family. As to quaternary structure, the basic unit is a heterodimer which dimerizes to form tetramers. The heterotetramers trimerize; 6 large subunits form a core ring with 6 small subunits projecting outwards. It depends on adenosylcob(III)alamin as a cofactor.

It localises to the bacterial microcompartment. The enzyme catalyses ethanolamine = acetaldehyde + NH4(+). Its pathway is amine and polyamine degradation; ethanolamine degradation. Catalyzes the deamination of various vicinal amino-alcohols to oxo compounds. Allows this organism to utilize ethanolamine as the sole source of nitrogen and carbon in the presence of external vitamin B12. This Escherichia coli (strain SMS-3-5 / SECEC) protein is Ethanolamine ammonia-lyase small subunit.